The following is a 485-amino-acid chain: Glutamate--tRNA ligase 2 (485 aa).

A 'HIGH' region motif is present at residues 10–20 (PSPTGPIHIGN). The short motif at 252 to 256 (KLSKR) is the 'KMSKS' region element. K255 serves as a coordination point for ATP.

This sequence belongs to the class-I aminoacyl-tRNA synthetase family. Glutamate--tRNA ligase type 1 subfamily. Monomer.

It localises to the cytoplasm. It carries out the reaction tRNA(Glu) + L-glutamate + ATP = L-glutamyl-tRNA(Glu) + AMP + diphosphate. Functionally, catalyzes the attachment of glutamate to tRNA(Glu) in a two-step reaction: glutamate is first activated by ATP to form Glu-AMP and then transferred to the acceptor end of tRNA(Glu). The protein is Glutamate--tRNA ligase 2 of Caldanaerobacter subterraneus subsp. tengcongensis (strain DSM 15242 / JCM 11007 / NBRC 100824 / MB4) (Thermoanaerobacter tengcongensis).